Consider the following 219-residue polypeptide: Pyridoxine/pyridoxamine 5'-phosphate oxidase (219 aa).

Residues 13 to 16 (RVEY) and K76 contribute to the substrate site. Residues 71–76 (RSVLCK), 86–87 (FT), K93, and Q115 contribute to the FMN site. Substrate contacts are provided by Y133, R137, and S141. FMN is bound by residues 150–151 (QS) and W196. 202 to 204 (RVH) is a substrate binding site. Residue R206 coordinates FMN.

It belongs to the pyridoxamine 5'-phosphate oxidase family. In terms of assembly, homodimer. FMN is required as a cofactor.

It catalyses the reaction pyridoxamine 5'-phosphate + O2 + H2O = pyridoxal 5'-phosphate + H2O2 + NH4(+). The catalysed reaction is pyridoxine 5'-phosphate + O2 = pyridoxal 5'-phosphate + H2O2. Its pathway is cofactor metabolism; pyridoxal 5'-phosphate salvage; pyridoxal 5'-phosphate from pyridoxamine 5'-phosphate: step 1/1. The protein operates within cofactor metabolism; pyridoxal 5'-phosphate salvage; pyridoxal 5'-phosphate from pyridoxine 5'-phosphate: step 1/1. Its function is as follows. Catalyzes the oxidation of either pyridoxine 5'-phosphate (PNP) or pyridoxamine 5'-phosphate (PMP) into pyridoxal 5'-phosphate (PLP). The chain is Pyridoxine/pyridoxamine 5'-phosphate oxidase from Mycobacterium leprae (strain TN).